Reading from the N-terminus, the 355-residue chain is Elongation factor Ts (355 aa).

Residues 82–85 are involved in Mg(2+) ion dislocation from EF-Tu; it reads TDFV.

This sequence belongs to the EF-Ts family.

It localises to the cytoplasm. In terms of biological role, associates with the EF-Tu.GDP complex and induces the exchange of GDP to GTP. It remains bound to the aminoacyl-tRNA.EF-Tu.GTP complex up to the GTP hydrolysis stage on the ribosome. The protein is Elongation factor Ts of Wolinella succinogenes (strain ATCC 29543 / DSM 1740 / CCUG 13145 / JCM 31913 / LMG 7466 / NCTC 11488 / FDC 602W) (Vibrio succinogenes).